Consider the following 214-residue polypeptide: Pyridoxine/pyridoxamine 5'-phosphate oxidase (214 aa).

Substrate is bound by residues 8 to 11 and Lys-66; that span reads RINY. FMN contacts are provided by residues 61–66, 76–77, Arg-82, Lys-83, and Gln-105; these read RIVLIK and FT. Tyr-123, Arg-127, and Ser-131 together coordinate substrate. FMN contacts are provided by residues 140–141 and Trp-184; that span reads QS. Substrate is bound at residue 190–192; sequence RLH. Position 194 (Arg-194) interacts with FMN.

Belongs to the pyridoxamine 5'-phosphate oxidase family. As to quaternary structure, homodimer. Requires FMN as cofactor.

It carries out the reaction pyridoxamine 5'-phosphate + O2 + H2O = pyridoxal 5'-phosphate + H2O2 + NH4(+). It catalyses the reaction pyridoxine 5'-phosphate + O2 = pyridoxal 5'-phosphate + H2O2. It participates in cofactor metabolism; pyridoxal 5'-phosphate salvage; pyridoxal 5'-phosphate from pyridoxamine 5'-phosphate: step 1/1. The protein operates within cofactor metabolism; pyridoxal 5'-phosphate salvage; pyridoxal 5'-phosphate from pyridoxine 5'-phosphate: step 1/1. Its function is as follows. Catalyzes the oxidation of either pyridoxine 5'-phosphate (PNP) or pyridoxamine 5'-phosphate (PMP) into pyridoxal 5'-phosphate (PLP). This is Pyridoxine/pyridoxamine 5'-phosphate oxidase from Burkholderia cenocepacia (strain HI2424).